We begin with the raw amino-acid sequence, 177 residues long: ATP synthase subunit delta (177 aa).

Belongs to the ATPase delta chain family. As to quaternary structure, F-type ATPases have 2 components, F(1) - the catalytic core - and F(0) - the membrane proton channel. F(1) has five subunits: alpha(3), beta(3), gamma(1), delta(1), epsilon(1). F(0) has three main subunits: a(1), b(2) and c(10-14). The alpha and beta chains form an alternating ring which encloses part of the gamma chain. F(1) is attached to F(0) by a central stalk formed by the gamma and epsilon chains, while a peripheral stalk is formed by the delta and b chains.

The protein resides in the cell inner membrane. Functionally, f(1)F(0) ATP synthase produces ATP from ADP in the presence of a proton or sodium gradient. F-type ATPases consist of two structural domains, F(1) containing the extramembraneous catalytic core and F(0) containing the membrane proton channel, linked together by a central stalk and a peripheral stalk. During catalysis, ATP synthesis in the catalytic domain of F(1) is coupled via a rotary mechanism of the central stalk subunits to proton translocation. This protein is part of the stalk that links CF(0) to CF(1). It either transmits conformational changes from CF(0) to CF(1) or is implicated in proton conduction. This Shewanella frigidimarina (strain NCIMB 400) protein is ATP synthase subunit delta.